Consider the following 258-residue polypeptide: 1-(5-phosphoribosyl)-5-[(5-phosphoribosylamino)methylideneamino] imidazole-4-carboxamide isomerase (258 aa).

Catalysis depends on Asp-17, which acts as the Proton acceptor. The active-site Proton donor is the Asp-136.

Belongs to the HisA/HisF family.

The protein localises to the cytoplasm. It catalyses the reaction 1-(5-phospho-beta-D-ribosyl)-5-[(5-phospho-beta-D-ribosylamino)methylideneamino]imidazole-4-carboxamide = 5-[(5-phospho-1-deoxy-D-ribulos-1-ylimino)methylamino]-1-(5-phospho-beta-D-ribosyl)imidazole-4-carboxamide. It functions in the pathway amino-acid biosynthesis; L-histidine biosynthesis; L-histidine from 5-phospho-alpha-D-ribose 1-diphosphate: step 4/9. In Corynebacterium jeikeium (strain K411), this protein is 1-(5-phosphoribosyl)-5-[(5-phosphoribosylamino)methylideneamino] imidazole-4-carboxamide isomerase.